We begin with the raw amino-acid sequence, 432 residues long: Enolase (432 aa).

Glutamine 163 serves as a coordination point for (2R)-2-phosphoglycerate. Glutamate 205 functions as the Proton donor in the catalytic mechanism. The Mg(2+) site is built by aspartate 242, glutamate 285, and aspartate 312. 4 residues coordinate (2R)-2-phosphoglycerate: lysine 337, arginine 366, serine 367, and lysine 388. Lysine 337 acts as the Proton acceptor in catalysis.

It belongs to the enolase family. Mg(2+) is required as a cofactor.

The protein localises to the cytoplasm. The protein resides in the secreted. Its subcellular location is the cell surface. It carries out the reaction (2R)-2-phosphoglycerate = phosphoenolpyruvate + H2O. Its pathway is carbohydrate degradation; glycolysis; pyruvate from D-glyceraldehyde 3-phosphate: step 4/5. Functionally, catalyzes the reversible conversion of 2-phosphoglycerate (2-PG) into phosphoenolpyruvate (PEP). It is essential for the degradation of carbohydrates via glycolysis. In Bifidobacterium adolescentis (strain ATCC 15703 / DSM 20083 / NCTC 11814 / E194a), this protein is Enolase.